The primary structure comprises 343 residues: Ribosomal RNA small subunit methyltransferase C (343 aa).

The protein belongs to the methyltransferase superfamily. RsmC family. As to quaternary structure, monomer.

Its subcellular location is the cytoplasm. The enzyme catalyses guanosine(1207) in 16S rRNA + S-adenosyl-L-methionine = N(2)-methylguanosine(1207) in 16S rRNA + S-adenosyl-L-homocysteine + H(+). Functionally, specifically methylates the guanine in position 1207 of 16S rRNA in the 30S particle. In Escherichia coli (strain K12 / DH10B), this protein is Ribosomal RNA small subunit methyltransferase C.